Reading from the N-terminus, the 277-residue chain is 2-dehydro-3-deoxyphosphooctonate aldolase (277 aa).

The protein belongs to the KdsA family.

It is found in the cytoplasm. The enzyme catalyses D-arabinose 5-phosphate + phosphoenolpyruvate + H2O = 3-deoxy-alpha-D-manno-2-octulosonate-8-phosphate + phosphate. Its pathway is carbohydrate biosynthesis; 3-deoxy-D-manno-octulosonate biosynthesis; 3-deoxy-D-manno-octulosonate from D-ribulose 5-phosphate: step 2/3. It functions in the pathway bacterial outer membrane biogenesis; lipopolysaccharide biosynthesis. This chain is 2-dehydro-3-deoxyphosphooctonate aldolase (kdsA), found in Mesorhizobium japonicum (strain LMG 29417 / CECT 9101 / MAFF 303099) (Mesorhizobium loti (strain MAFF 303099)).